We begin with the raw amino-acid sequence, 171 residues long: Putative pre-16S rRNA nuclease (171 aa).

The protein belongs to the YqgF nuclease family.

The protein resides in the cytoplasm. In terms of biological role, could be a nuclease involved in processing of the 5'-end of pre-16S rRNA. This chain is Putative pre-16S rRNA nuclease, found in Corynebacterium diphtheriae (strain ATCC 700971 / NCTC 13129 / Biotype gravis).